The primary structure comprises 213 residues: Nicolin-1 (213 aa).

In terms of assembly, part of the neuronal tubulin polyglutamylase complex which contains TPGS1, TPGS2, TTLL1, LRRC49 and NICN1.

The protein resides in the nucleus. In Canis lupus familiaris (Dog), this protein is Nicolin-1 (NICN1).